Consider the following 495-residue polypeptide: Aspartyl/glutamyl-tRNA(Asn/Gln) amidotransferase subunit B (495 aa).

The protein belongs to the GatB/GatE family. GatB subfamily. As to quaternary structure, heterotrimer of A, B and C subunits.

The enzyme catalyses L-glutamyl-tRNA(Gln) + L-glutamine + ATP + H2O = L-glutaminyl-tRNA(Gln) + L-glutamate + ADP + phosphate + H(+). It catalyses the reaction L-aspartyl-tRNA(Asn) + L-glutamine + ATP + H2O = L-asparaginyl-tRNA(Asn) + L-glutamate + ADP + phosphate + 2 H(+). In terms of biological role, allows the formation of correctly charged Asn-tRNA(Asn) or Gln-tRNA(Gln) through the transamidation of misacylated Asp-tRNA(Asn) or Glu-tRNA(Gln) in organisms which lack either or both of asparaginyl-tRNA or glutaminyl-tRNA synthetases. The reaction takes place in the presence of glutamine and ATP through an activated phospho-Asp-tRNA(Asn) or phospho-Glu-tRNA(Gln). This chain is Aspartyl/glutamyl-tRNA(Asn/Gln) amidotransferase subunit B, found in Beijerinckia indica subsp. indica (strain ATCC 9039 / DSM 1715 / NCIMB 8712).